The primary structure comprises 934 residues: UPF0182 protein sync_1321 (934 aa).

The next 9 membrane-spanning stretches (helical) occupy residues 2-22, 45-65, 86-106, 129-149, 165-185, 208-228, 251-271, 300-320, and 327-347; these read AKII…IVII, LLLQ…CALW, GYRY…VLAI, FSTG…IMFG, VCIC…FSIP, IAFG…TALW, HGLR…MWLS, LGSI…FSSV, and LILA…FPLM.

The protein belongs to the UPF0182 family.

The protein localises to the cell membrane. This is UPF0182 protein sync_1321 from Synechococcus sp. (strain CC9311).